The following is a 214-amino-acid chain: Ras-related protein Rab-11A (214 aa).

GTP contacts are provided by residues 20 to 28, 39 to 45, 68 to 72, 126 to 129, and 156 to 158; these read GDSGVGKSN, SLETKST, DTAGQ, NKSD, and SAL. Residues 42–50 carry the Effector region motif; that stretch reads TKSTIGVEF. 2 S-geranylgeranyl cysteine lipidation sites follow: Cys213 and Cys214.

This sequence belongs to the small GTPase superfamily. Rab family.

The protein localises to the contractile vacuole membrane. Required for normal contractile vacuole structure and function. Cells expressing a dominant negative rab11A exhibit a more extensive contractile vacuole network and enlarged contractile vacuole bladders. These cells exhibit a functional defect in osmotic regulation where cells immersed in water become rounded and detach from the surface, and contain swollen contractile vacuoles. The protein is Ras-related protein Rab-11A (rab11A) of Dictyostelium discoideum (Social amoeba).